The primary structure comprises 156 residues: Cyanate hydratase (156 aa).

Active-site residues include Arg-96, Glu-99, and Ser-122.

Belongs to the cyanase family.

The catalysed reaction is cyanate + hydrogencarbonate + 3 H(+) = NH4(+) + 2 CO2. In terms of biological role, catalyzes the reaction of cyanate with bicarbonate to produce ammonia and carbon dioxide. The chain is Cyanate hydratase from Escherichia coli O9:H4 (strain HS).